Consider the following 121-residue polypeptide: Ragulator complex protein LAMTOR4 homolog (121 aa).

A disordered region spans residues 91–121; sequence TQNGATTSSSSSTSYNDAAEGNNISSSTVLA. Residues 112–121 show a composition bias toward polar residues; that stretch reads NNISSSTVLA.

This sequence belongs to the LAMTOR4 family. As to quaternary structure, part of the Ragulator complex.

It is found in the lysosome. In terms of biological role, regulator of the TOR pathway, a signaling cascade that promotes cell growth in response to growth factors, energy levels, and amino acids. As part of the Ragulator complex, may activate the TOR signaling cascade in response to amino acids. The protein is Ragulator complex protein LAMTOR4 homolog of Drosophila pseudoobscura pseudoobscura (Fruit fly).